Consider the following 372-residue polypeptide: Queuine tRNA-ribosyltransferase (372 aa).

The active-site Proton acceptor is Asp-90. Substrate is bound by residues Asp-90–Phe-94, Asp-144, Gln-193, and Gly-220. Residues Gly-251–Asp-257 form an RNA binding region. Asp-270 functions as the Nucleophile in the catalytic mechanism. The segment at Thr-275–Arg-279 is RNA binding; important for wobble base 34 recognition. The Zn(2+) site is built by Cys-308, Cys-310, Cys-313, and His-339.

This sequence belongs to the queuine tRNA-ribosyltransferase family. In terms of assembly, homodimer. Within each dimer, one monomer is responsible for RNA recognition and catalysis, while the other monomer binds to the replacement base PreQ1. Zn(2+) serves as cofactor.

It carries out the reaction 7-aminomethyl-7-carbaguanine + guanosine(34) in tRNA = 7-aminomethyl-7-carbaguanosine(34) in tRNA + guanine. It functions in the pathway tRNA modification; tRNA-queuosine biosynthesis. In terms of biological role, catalyzes the base-exchange of a guanine (G) residue with the queuine precursor 7-aminomethyl-7-deazaguanine (PreQ1) at position 34 (anticodon wobble position) in tRNAs with GU(N) anticodons (tRNA-Asp, -Asn, -His and -Tyr). Catalysis occurs through a double-displacement mechanism. The nucleophile active site attacks the C1' of nucleotide 34 to detach the guanine base from the RNA, forming a covalent enzyme-RNA intermediate. The proton acceptor active site deprotonates the incoming PreQ1, allowing a nucleophilic attack on the C1' of the ribose to form the product. After dissociation, two additional enzymatic reactions on the tRNA convert PreQ1 to queuine (Q), resulting in the hypermodified nucleoside queuosine (7-(((4,5-cis-dihydroxy-2-cyclopenten-1-yl)amino)methyl)-7-deazaguanosine). The protein is Queuine tRNA-ribosyltransferase of Campylobacter hominis (strain ATCC BAA-381 / DSM 21671 / CCUG 45161 / LMG 19568 / NCTC 13146 / CH001A).